A 197-amino-acid polypeptide reads, in one-letter code: ATP-dependent Clp protease proteolytic subunit 3 (197 aa).

The active-site Nucleophile is serine 96. Histidine 121 is an active-site residue.

Belongs to the peptidase S14 family. As to quaternary structure, fourteen ClpP subunits assemble into 2 heptameric rings which stack back to back to give a disk-like structure with a central cavity, resembling the structure of eukaryotic proteasomes.

The protein localises to the cytoplasm. The catalysed reaction is Hydrolysis of proteins to small peptides in the presence of ATP and magnesium. alpha-casein is the usual test substrate. In the absence of ATP, only oligopeptides shorter than five residues are hydrolyzed (such as succinyl-Leu-Tyr-|-NHMec, and Leu-Tyr-Leu-|-Tyr-Trp, in which cleavage of the -Tyr-|-Leu- and -Tyr-|-Trp bonds also occurs).. Cleaves peptides in various proteins in a process that requires ATP hydrolysis. Has a chymotrypsin-like activity. Plays a major role in the degradation of misfolded proteins. This Prochlorococcus marinus (strain MIT 9313) protein is ATP-dependent Clp protease proteolytic subunit 3.